We begin with the raw amino-acid sequence, 267 residues long: Translation initiation factor 2 subunit alpha (267 aa).

Residues 12-83 enclose the S1 motif domain; sequence GELVVATVKE…RKKQVDVSLK (72 aa).

This sequence belongs to the eIF-2-alpha family. As to quaternary structure, heterotrimer composed of an alpha, a beta and a gamma chain.

EIF-2 functions in the early steps of protein synthesis by forming a ternary complex with GTP and initiator tRNA. The chain is Translation initiation factor 2 subunit alpha from Hyperthermus butylicus (strain DSM 5456 / JCM 9403 / PLM1-5).